The sequence spans 418 residues: Protease LasA (418 aa).

The signal sequence occupies residues 1–31; sequence MQHKRSRALASPRSPFLFALLALAVGGTANA. The propeptide occupies 32 to 236; sequence HDDGLPAFRY…ARQLQAKAAL (205 aa). Residues histidine 259 and aspartate 272 each contribute to the Zn(2+) site. Cysteine 301 and cysteine 347 form a disulfide bridge. Catalysis depends on proton donor/acceptor residues histidine 317 and histidine 356. Residue histidine 358 coordinates Zn(2+). Cysteine 391 and cysteine 406 are joined by a disulfide.

It belongs to the peptidase M23A family. Zn(2+) is required as a cofactor.

It localises to the secreted. Involved in proteolysis and elastolysis (degradation of the host protein elastin). Has staphylolytic activity (degrades pentaglycine cross-links in cell wall peptidoglycan), preferring Gly-Gly-|-X substrates where X is Ala or Gly. Enhances the elastolytic but not proteolytic activity of elastase (lasB) and elastolytic activity of other proteases. Degradation of elastin is likely to contribute to the pathogenicity of P.aeruginosa. This is Protease LasA (lasA) from Pseudomonas aeruginosa (strain UCBPP-PA14).